Here is a 393-residue protein sequence, read N- to C-terminus: Dual specificity mitogen-activated protein kinase kinase 1 (393 aa).

The interval 1–27 (MPKKKPTPIQLNPAPDGSAVNGTSSAE) is disordered. The Protein kinase domain occupies 68–361 (FEKISELGAG…LKQLMVHAFI (294 aa)). Residues 74-82 (LGAGNGGVV) and K97 contribute to the ATP site. D190 serves as the catalytic Proton acceptor. 2 positions are modified to phosphoserine; by RAF: S218 and S222. The segment at 270 to 307 (ELELLFGCQVEGDAAETPPRPRTPGRPLSSYGMDSRPP) is RAF1-binding. T286 is modified (phosphothreonine). Residue T292 is modified to Phosphothreonine; by MAPK1. Position 298 is a phosphoserine; by PAK (S298).

The protein belongs to the protein kinase superfamily. STE Ser/Thr protein kinase family. MAP kinase kinase subfamily. As to quaternary structure, found in a complex with at least BRAF, HRAS, MAP2K1, MAPK3/ERK1 and RGS14. Forms a heterodimer with MAP2K2/MEK2. Forms heterodimers with KSR2 which further dimerize to form tetramers. Interacts with KSR1 or KSR2 and BRAF; the interaction with KSR1 or KSR2 mediates KSR1-BRAF or KSR2-BRAF dimerization. Interacts with ARBB2, LAMTOR3, MAPK1/ERK2 and RAF1. Interacts with MAPK1/ERK2. Interacts with MORG1. Interacts with PPARG. Interacts with VRK2. Interacts with SGK1. Interacts with BIRC6/bruce. Interacts with KAT7; the interaction promotes KAT7 phosphorylation. Interacts with RAF1 and NEK10; the interaction is required for ERK1/2-signaling pathway activation in response to UV irradiation. Interacts with TRAF3IP3. Interacts with MOS. Post-translationally, phosphorylation at Ser-218 and Ser-222 by MAP kinase kinase kinases (BRAF or MEKK1) positively regulates kinase activity. Also phosphorylated at Thr-292 by MAPK1/ERK2 and at Ser-298 by PAK. MAPK1/ERK2 phosphorylation of Thr-292 occurs in response to cellular adhesion and leads to inhibition of Ser-298 phosphorylation by PAK. Autophosphorylated at Ser-218 and Ser-222, autophosphosphorylation is promoted by NEK10 following UV irradiation.

It is found in the cytoplasm. It localises to the cytoskeleton. The protein resides in the microtubule organizing center. Its subcellular location is the centrosome. The protein localises to the spindle pole body. It is found in the nucleus. It localises to the membrane. The catalysed reaction is L-seryl-[protein] + ATP = O-phospho-L-seryl-[protein] + ADP + H(+). It carries out the reaction L-threonyl-[protein] + ATP = O-phospho-L-threonyl-[protein] + ADP + H(+). The enzyme catalyses L-tyrosyl-[protein] + ATP = O-phospho-L-tyrosyl-[protein] + ADP + H(+). Ras proteins such as HRAS mediate the activation of RAF proteins such as RAF1 or BRAF which in turn activate extracellular signal-regulated kinases (ERK) through MAPK (mitogen-activated protein kinases) and ERK kinases MAP2K1/MEK1 and MAP2K2/MEK2. Activation occurs through phosphorylation of Ser-218 and Ser-222. MAP2K1/MEK1 binds KSR1 or KSR2 releasing the inhibitory intramolecular interaction between KSR1 or KSR2 protein kinase and N-terminal domains. This allows KSR1 or KSR2 dimerization with BRAF leading to BRAF activation and phosphorylation of MAP2K1. MAP2K1/MEK1 is also the target of negative feed-back regulation by its substrate kinases, such as MAPK1/ERK2. These phosphorylate MAP2K1/MEK1 on Thr-292, thereby facilitating dephosphorylation of the activating residues Ser-218 and Ser-222. Inhibited by serine/threonine phosphatase 2A. In terms of biological role, dual specificity protein kinase which acts as an essential component of the MAP kinase signal transduction pathway. Binding of extracellular ligands such as growth factors, cytokines and hormones to their cell-surface receptors activates RAS and this initiates RAF1 activation. RAF1 then further activates the dual-specificity protein kinases MAP2K1/MEK1 and MAP2K2/MEK2. Both MAP2K1/MEK1 and MAP2K2/MEK2 function specifically in the MAPK/ERK cascade, and catalyze the concomitant phosphorylation of a threonine and a tyrosine residue in a Thr-Glu-Tyr sequence located in the extracellular signal-regulated kinases MAPK3/ERK1 and MAPK1/ERK2, leading to their activation and further transduction of the signal within the MAPK/ERK cascade. Activates BRAF in a KSR1 or KSR2-dependent manner; by binding to KSR1 or KSR2 releases the inhibitory intramolecular interaction between KSR1 or KSR2 protein kinase and N-terminal domains which promotes KSR1 or KSR2-BRAF dimerization and BRAF activation. Depending on the cellular context, this pathway mediates diverse biological functions such as cell growth, adhesion, survival and differentiation, predominantly through the regulation of transcription, metabolism and cytoskeletal rearrangements. One target of the MAPK/ERK cascade is peroxisome proliferator-activated receptor gamma (PPARG), a nuclear receptor that promotes differentiation and apoptosis. MAP2K1/MEK1 has been shown to export PPARG from the nucleus. The MAPK/ERK cascade is also involved in the regulation of endosomal dynamics, including lysosome processing and endosome cycling through the perinuclear recycling compartment (PNRC), as well as in the fragmentation of the Golgi apparatus during mitosis. The polypeptide is Dual specificity mitogen-activated protein kinase kinase 1 (Rattus norvegicus (Rat)).